We begin with the raw amino-acid sequence, 92 residues long: UPF0250 protein XF_1271 (92 aa).

Belongs to the UPF0250 family.

In Xylella fastidiosa (strain 9a5c), this protein is UPF0250 protein XF_1271.